The following is a 379-amino-acid chain: RING finger protein 215 (379 aa).

2 disordered regions span residues 1–21 (MGSA…PPSP) and 44–63 (AADG…RSVR). At 1 to 24 (MGSADRPALRSPSLPPPPPSPPSP) the chain is on the cytoplasmic side. A helical membrane pass occupies residues 25–45 (LLLLLPLLPLWLGLMGPGAAA). Residues 46–252 (DGSEPATGEG…GGAQAQEQKP (207 aa)) are Extracellular-facing. N-linked (GlcNAc...) asparagine glycosylation occurs at Asn188. The chain crosses the membrane as a helical span at residues 253 to 273 (LQQLWNAILLVAMLLCTGLVV). Topologically, residues 274 to 379 (QAQRQASRQN…NVLGNHYSDD (106 aa)) are cytoplasmic. Residues 327–368 (CAVCLDYFCNKQWLRVLPCKHEFHRDCVDPWLMLQQTCPLCK) form an RING-type; atypical zinc finger.

The protein resides in the membrane. In Mus musculus (Mouse), this protein is RING finger protein 215 (Rnf215).